A 340-amino-acid polypeptide reads, in one-letter code: UDP-3-O-acylglucosamine N-acyltransferase (340 aa).

The Proton acceptor role is filled by His237.

The protein belongs to the transferase hexapeptide repeat family. LpxD subfamily. In terms of assembly, homotrimer.

The enzyme catalyses a UDP-3-O-[(3R)-3-hydroxyacyl]-alpha-D-glucosamine + a (3R)-hydroxyacyl-[ACP] = a UDP-2-N,3-O-bis[(3R)-3-hydroxyacyl]-alpha-D-glucosamine + holo-[ACP] + H(+). Its pathway is bacterial outer membrane biogenesis; LPS lipid A biosynthesis. Its function is as follows. Catalyzes the N-acylation of UDP-3-O-acylglucosamine using 3-hydroxyacyl-ACP as the acyl donor. Is involved in the biosynthesis of lipid A, a phosphorylated glycolipid that anchors the lipopolysaccharide to the outer membrane of the cell. In Desulfosudis oleivorans (strain DSM 6200 / JCM 39069 / Hxd3) (Desulfococcus oleovorans), this protein is UDP-3-O-acylglucosamine N-acyltransferase.